Here is a 2391-residue protein sequence, read N- to C-terminus: Filaggrin-2 (2391 aa).

Residues 1–81 (MTDLLRSVVT…TEFLLMIFKL (81 aa)) are S-100-like. 2 EF-hand domains span residues 8–43 (VVTV…ELHP) and 49–84 (DDPD…LTMA). Residues D62, D64, D66, R68, and E73 each coordinate Ca(2+). Disordered stretches follow at residues 96–275 (ASGS…DSGR), 349–369 (SYSQ…CGGQ), and 406–2391 (NSSS…LSRH). Basic residues predominate over residues 98-107 (GSKKHRRGHR). The span at 111–121 (EESETEEDEED) shows a compositional bias: acidic residues. A compositionally biased stretch (basic residues) spans 149–163 (GTVKCRHGSNSRRLG). The span at 166 to 176 (GNLSSSGNQEG) shows a compositional bias: polar residues. Over residues 193–209 (GKDRHGSSSVELRERIN) the composition is skewed to basic and acidic residues. A Filaggrin 1 repeat occupies 245–289 (ETSGHESNSTQSRIREQKLGSSCSGSGDSGRRSHACGYSNSSGCG). Composition is skewed to polar residues over residues 420–442 (GSGS…SSGF) and 449–476 (SGQT…SGKT). A Filaggrin 2 repeat occupies 421–466 (SGSSQSTSFEQHGTGLSQSSGFEQHVCGSGQTCGQHESTSSQSLGY). A compositionally biased stretch (gly residues) spans 480–507 (GQHGSGSGQSSGFGQCGSGSGQSSGFGQ). Residues 508–562 (HGSVSGQSSGFGQHGSVSGQSSGFGQHESRSRQSSYGQHGSGSSQSSGYGQYGSR) are compositionally biased toward low complexity. Over residues 568 to 604 (GQHGLGSGQSTGFGQYGSGSGQSSGFGQHGSGSGQSS) the composition is skewed to gly residues. Residues 605–655 (GFGQHESRSGQSSYGQHSSGSSQSSGYGQHGSRQTSGFGQHGSGSSQSTGF) show a composition bias toward low complexity. A compositionally biased stretch (gly residues) spans 656–666 (GQYGSGSGQSS). Residues 667 to 734 (GFGQHVSGSG…SSGQSSSFGQ (68 aa)) show a composition bias toward low complexity. The span at 735 to 756 (HGSGSGQSSGFGQHGSGSGQSS) shows a compositional bias: gly residues. The span at 757-807 (GFGQHESRSGQSSYGQHSSGSSQSSGYGQHGSRQTSGFGQHGSGSSQSTGF) shows a compositional bias: low complexity. The span at 808–831 (GQYGSGSGQSAGFGQHGSGSGQSS) shows a compositional bias: gly residues. The segment covering 832-884 (GFGQHESRSHQSSYGQHGSGSSQSSGYGQHGSSSGQTSGFGQHRSSSGQYSGF) has biased composition (low complexity). The span at 885–908 (GQHGSGSGQSSGFGQHGTGSGQYS) shows a compositional bias: gly residues. The segment covering 918–956 (HQSSYGQHGSGSSQSSGYGQHGSSSGQTFGFGQHRSGSG) has biased composition (low complexity). Residues 957–972 (QSSGFGQHGSGSGQSS) show a composition bias toward gly residues. Composition is skewed to low complexity over residues 973–982 (GFGQHESGSG) and 994–1027 (SSQS…GFGQ). One copy of the Filaggrin 3 repeat lies at 1019–1051 (SGQTTGFGQHRSSSGQYSGFGQHGSGSDQSSGF). Positions 1052 to 1062 (GQHGTGSGQSS) are enriched in gly residues. The segment covering 1063–1098 (GFGQYESRSRQSSYGQHGSGSSQSSGYGQHGSNSGQ) has biased composition (low complexity). The stretch at 1097 to 1141 (GQTSGFGQHRPGSGQSSGFGQYGSGSGQSSGFGQHGSGTGKSSGF) is one Filaggrin 4 repeat. The segment covering 1111–1137 (QSSGFGQYGSGSGQSSGFGQHGSGTGK) has biased composition (gly residues). Over residues 1148 to 1174 (SGQSSYGQHGTGSSQSSGCGQHESGSG) the composition is skewed to low complexity. Over residues 1175-1198 (PTTSFGQHVSGSDNFSSSGQHISD) the composition is skewed to polar residues. Residues 1206-1220 (GQYGSGSGQSTGLGQ) show a composition bias toward gly residues. Polar residues predominate over residues 1226–1249 (VESGSTVHGRQETTHGQTINTTRH). Positions 1250 to 1263 (SQSGQGQSTQTGSR) are enriched in low complexity. S1276 bears the Phosphoserine mark. The segment covering 1329–1343 (HGQSTQTGSRTSGRQ) has biased composition (polar residues). Positions 1346–1355 (SHSDATDSEV) are enriched in basic and acidic residues. Residues 1366–1377 (QEQTHSQAGSQH) show a composition bias toward polar residues. Positions 1378 to 1390 (GESESTVHERHET) are enriched in basic and acidic residues. A compositionally biased stretch (low complexity) spans 1406 to 1416 (HGQSTQRGSRT). Phosphoserine occurs at positions 1427 and 1428. The span at 1439 to 1459 (RPQSQEQTHGQAGSQHGESGS) shows a compositional bias: polar residues. A Filaggrin 5 repeat occupies 1455 to 1510 (GESGSTVHGRHGTTHGQTGDTTRHAHYHHGKSTQRGSSTTGRRGSGHSESSDSEVH). The segment covering 1487-1496 (TQRGSSTTGR) has biased composition (low complexity). Residues S1504 and S1505 each carry the phosphoserine modification. The segment covering 1510 to 1529 (HSGGSHTHSGHTHGQSGSQH) has biased composition (low complexity). The span at 1544–1559 (HGQTGDTTRHSYSGHE) shows a compositional bias: polar residues. The segment covering 1560–1572 (QTTQTGSRTTGRQ) has biased composition (low complexity). 2 stretches are compositionally biased toward basic and acidic residues: residues 1575 to 1584 (SHSESTDSEV) and 1605 to 1618 (QHEE…ERHG). Position 1579 is a phosphoserine (S1579). Residues 1607-1662 (EEPEFTVHERHGTTHGQIGDTTGHSHSGHGQSTQRGSRTTGRQRSSHSESSDSEVH) form a Filaggrin 6 repeat. The segment covering 1627-1649 (TTGHSHSGHGQSTQRGSRTTGRQ) has biased composition (low complexity). Over residues 1652–1661 (SHSESSDSEV) the composition is skewed to basic and acidic residues. 2 positions are modified to phosphoserine: S1656 and S1657. Composition is skewed to low complexity over residues 1662–1686 (HSGV…QSES) and 1711–1720 (GLTTQTGSRT). Residues 1755-1768 (QHGESESIVHERHG) are compositionally biased toward basic and acidic residues. The Filaggrin 7 repeat unit spans residues 1757–1812 (GESESIVHERHGTIHGQTGDTTRHAHSGHGQSTQTGSRTTGRRSSGHSEYSDSEGH). A compositionally biased stretch (low complexity) spans 1784–1795 (GHGQSTQTGSRT). Phosphoserine occurs at positions 1800 and 1807. Residues 1834-1845 (GESESIVDERHG) are compositionally biased toward basic and acidic residues. A compositionally biased stretch (low complexity) spans 1849–1873 (GQTGDTSGHSQSGHGQSTQSGSSTT). Residues 1879–1888 (GHSESSDSEV) show a composition bias toward basic and acidic residues. Phosphoserine occurs at positions 1883, 1884, and 1959. 2 Filaggrin repeats span residues 1928 to 1964 (DTTE…SEGP) and 1984 to 2039 (PESG…SEGH). Low complexity-rich tracts occupy residues 1963–1982 (GPSG…AGSH) and 2013–2022 (GQSTQRGSRT). S2034 is modified (phosphoserine). 3 stretches are compositionally biased toward low complexity: residues 2039 to 2059 (HSGV…SQHG), 2114 to 2125 (HSGVSHTHSGHT), and 2162 to 2176 (HGQS…TGRQ). One copy of the Filaggrin 10 repeat lies at 2134–2189 (GESGSAIHGRQGTIHGQTGDTTRHGQSGHGQSTQTGSRTTGRQRSSHSESSDSEVH). A compositionally biased stretch (basic and acidic residues) spans 2179-2190 (SHSESSDSEVHS). Low complexity-rich tracts occupy residues 2201 to 2211 (HSQAGSRHGQS), 2219 to 2228 (QGTTHGQTGD), and 2238 to 2247 (GQSTQRGSRT). Polar residues predominate over residues 2273 to 2288 (GHIQGQAGSQQRQPGS). The segment covering 2320–2331 (SRSSRASHFQSH) has biased composition (low complexity). The span at 2367 to 2391 (SRKSISNSHLSWSTDSTANKQLSRH) shows a compositional bias: polar residues.

The protein belongs to the S100-fused protein family. In the N-terminal section; belongs to the S-100 family. Deiminated by PADI1, PADI2 or PADI3 in vitro. The deiminated form is degraded by calpain-1/CAPN1 more quickly and into shorter peptides than the intact protein. Post-translationally, may be processed by calpain-1/CAPN1 in the uppermost epidermal layers. As to expression, expressed in skin, thymus, stomach and placenta, but not detected in heart, brain, liver, lung, bone marrow, small intestine, spleen, prostate, colon, adrenal gland, kidney, pancreas, mammary gland, bladder, thyroid, salivary gland and trachea. Weakly expressed in esophagus, tonsils and testis (at protein level). In the skin, strongly expressed in the upper stratum granulosum and lower stratum corneum, but not detected in the upper stratum corneum (at protein level). In scalp hair follicles, mainly restricted within the granular and cornified cells surrounding the infundibular outer root sheath, with weak expression in central and proximal outer root sheath (at protein level). Tends to be down-regulated in sporiatic lesions compared to non-lesional skin inthe same patients.

It is found in the cytoplasm. The protein localises to the cytoplasmic granule. Essential for normal cell-cell adhesion in the cornified cell layers. Important for proper integrity and mechanical strength of the stratum corneum of the epidermis. The sequence is that of Filaggrin-2 (FLG2) from Homo sapiens (Human).